A 115-amino-acid polypeptide reads, in one-letter code: Phosphoribosyl-AMP cyclohydrolase (115 aa).

Asp-80 serves as a coordination point for Mg(2+). Cys-81 is a binding site for Zn(2+). Positions 82 and 84 each coordinate Mg(2+). Residues Cys-97 and Cys-104 each contribute to the Zn(2+) site.

Belongs to the PRA-CH family. In terms of assembly, homodimer. Mg(2+) serves as cofactor. Zn(2+) is required as a cofactor.

It is found in the cytoplasm. The enzyme catalyses 1-(5-phospho-beta-D-ribosyl)-5'-AMP + H2O = 1-(5-phospho-beta-D-ribosyl)-5-[(5-phospho-beta-D-ribosylamino)methylideneamino]imidazole-4-carboxamide. It functions in the pathway amino-acid biosynthesis; L-histidine biosynthesis; L-histidine from 5-phospho-alpha-D-ribose 1-diphosphate: step 3/9. In terms of biological role, catalyzes the hydrolysis of the adenine ring of phosphoribosyl-AMP. This Mycobacterium leprae (strain Br4923) protein is Phosphoribosyl-AMP cyclohydrolase.